The chain runs to 136 residues: Histone H3-like 3 (136 aa).

The segment covering 1–15 (MARTKQTARKSHGGK) has biased composition (basic residues). Residues 1–42 (MARTKQTARKSHGGKAPRTLLATKAARKSAPTTGGVKKPHRY) are disordered. N6,N6,N6-trimethyllysine; alternate is present on residues Lys5 and Lys10. Residues Lys5 and Lys10 each carry the N6,N6-dimethyllysine; alternate modification. An N6-methyllysine; alternate mark is found at Lys5 and Lys10. Lys10 carries the N6-acetyllysine; alternate modification. Ser11 carries the post-translational modification Phosphoserine. The residue at position 15 (Lys15) is an N6-acetyllysine. Residues Lys24 and Lys28 each carry the N6-methyllysine; alternate modification. Lys24 bears the N6-acetyllysine; alternate mark. At Lys28 the chain carries N6,N6,N6-trimethyllysine; alternate. Lys28 bears the N6,N6-dimethyllysine; alternate mark. At Ser29 the chain carries Phosphoserine. Lys37 is modified (N6,N6,N6-trimethyllysine; alternate). N6,N6-dimethyllysine; alternate is present on Lys37. Lys37 bears the N6-methyllysine; alternate mark.

Belongs to the histone H3 family. As to quaternary structure, the nucleosome is a histone octamer containing two molecules each of H2A, H2B, H3 and H4 assembled in one H3-H4 heterotetramer and two H2A-H2B heterodimers. The octamer wraps approximately 147 bp of DNA. As to expression, expressed in roots, seedlings, leaves and open flowers.

The protein resides in the nucleus. It localises to the chromosome. In terms of biological role, core component of nucleosome. Nucleosomes wrap and compact DNA into chromatin, limiting DNA accessibility to the cellular machineries which require DNA as a template. Histones thereby play a central role in transcription regulation, DNA repair, DNA replication and chromosomal stability. DNA accessibility is regulated via a complex set of post-translational modifications of histones, also called histone code, and nucleosome remodeling. This Arabidopsis thaliana (Mouse-ear cress) protein is Histone H3-like 3.